A 326-amino-acid chain; its full sequence is Transmembrane protein 255B (326 aa).

Transmembrane regions (helical) follow at residues 26-46 (LWFVGSLLLVSVLIVTVGLAA), 55-75 (VGGYYPGIILGFGSFLGIIGI), 85-105 (LVAAIVFISFGVVAAFCCAIV), and 200-220 (AVLNVLGLFLGIITAAVLGAF). The segment at 284-326 (LASSEDLQPPSPSSSGSGLPGQAPPCYAPTYFPPGEKPPPYAP) is disordered. A compositionally biased stretch (pro residues) spans 305-326 (QAPPCYAPTYFPPGEKPPPYAP).

This sequence belongs to the TMEM255 family.

The protein resides in the membrane. The chain is Transmembrane protein 255B (TMEM255B) from Homo sapiens (Human).